The following is a 329-amino-acid chain: Aspartate--ammonia ligase (329 aa).

Belongs to the class-II aminoacyl-tRNA synthetase family. AsnA subfamily.

It localises to the cytoplasm. The enzyme catalyses L-aspartate + NH4(+) + ATP = L-asparagine + AMP + diphosphate + H(+). Its pathway is amino-acid biosynthesis; L-asparagine biosynthesis; L-asparagine from L-aspartate (ammonia route): step 1/1. This Ureaplasma urealyticum serovar 10 (strain ATCC 33699 / Western) protein is Aspartate--ammonia ligase.